A 508-amino-acid chain; its full sequence is Photosystem II CP47 reaction center protein (508 aa).

6 helical membrane-spanning segments follow: residues A21–S36, I101–W115, G140–F156, I203–S218, V237–V252, and S457–R472.

It belongs to the PsbB/PsbC family. PsbB subfamily. In terms of assembly, PSII is composed of 1 copy each of membrane proteins PsbA, PsbB, PsbC, PsbD, PsbE, PsbF, PsbH, PsbI, PsbJ, PsbK, PsbL, PsbM, PsbT, PsbX, PsbY, PsbZ, Psb30/Ycf12, at least 3 peripheral proteins of the oxygen-evolving complex and a large number of cofactors. It forms dimeric complexes. Interacts with PAM68. Interacts with HHL1. Requires Binds multiple chlorophylls. PSII binds additional chlorophylls, carotenoids and specific lipids. as cofactor.

The protein resides in the plastid. It is found in the chloroplast thylakoid membrane. One of the components of the core complex of photosystem II (PSII). It binds chlorophyll and helps catalyze the primary light-induced photochemical processes of PSII. PSII is a light-driven water:plastoquinone oxidoreductase, using light energy to abstract electrons from H(2)O, generating O(2) and a proton gradient subsequently used for ATP formation. This Arabidopsis thaliana (Mouse-ear cress) protein is Photosystem II CP47 reaction center protein.